The primary structure comprises 556 residues: Formate--tetrahydrofolate ligase (556 aa).

65 to 72 serves as a coordination point for ATP; it reads TPAGEGKS.

This sequence belongs to the formate--tetrahydrofolate ligase family.

It catalyses the reaction (6S)-5,6,7,8-tetrahydrofolate + formate + ATP = (6R)-10-formyltetrahydrofolate + ADP + phosphate. It functions in the pathway one-carbon metabolism; tetrahydrofolate interconversion. The polypeptide is Formate--tetrahydrofolate ligase (Streptococcus equi subsp. zooepidemicus (strain MGCS10565)).